Reading from the N-terminus, the 361-residue chain is MHRSSYCREETTLCQGVNSTWVPPADTVPEASLTPHSPPAPDSPAPSPKPGYGYSACEEKPGDPRIRRPMNAFMVWAKDERKRLAQQNPDLHNAVLSKMLGQSWKNLTSAEKRPFVEEAERLRVQHLQDHPNYKYRPRRKKQAKKLKRMDPSHHLRNEGYTGGQPMVNLSHFRELHPLGGSGELESYGLPTPEMSPLDVLEPSEPAFFPPHMREDPDPGLFRTYQHEMDFSQEKTLREISLPYSTSPSHMGSFLRTPTPSAFYYKPHGGSSARTPLGQLSPPPEAPALDAMDHLNHAELWGDFDLNEFDQYLNMSRTQGPGYSFPMSKLGGPRTIPCEENSLISALSDASTAMYYTPCITG.

The disordered stretch occupies residues 17 to 65; the sequence is VNSTWVPPADTVPEASLTPHSPPAPDSPAPSPKPGYGYSACEEKPGDPR. Positions 36–49 are enriched in pro residues; the sequence is HSPPAPDSPAPSPK. The HMG box DNA-binding region spans 66–134; sequence IRRPMNAFMV…QHLQDHPNYK (69 aa). 2 interaction with DNA regions span residues 68-81 and 92-104; these read RPMN…KDER and HNAV…GQSW. The tract at residues 127–163 is disordered; that stretch reads LQDHPNYKYRPRRKKQAKKLKRMDPSHHLRNEGYTGG. Over residues 133–147 the composition is skewed to basic residues; sequence YKYRPRRKKQAKKLK. Residues 147-208 form an important for transcriptional activation region; it reads KRMDPSHHLR…VLEPSEPAFF (62 aa). Over residues 148–157 the composition is skewed to basic and acidic residues; the sequence is RMDPSHHLRN. A Sox C-terminal domain is found at 234 to 360; sequence KTLREISLPY…TAMYYTPCIT (127 aa). The 9aaTAD motif lies at 306 to 314; that stretch reads NEFDQYLNM.

As to expression, expressed in the adult spleen, lung, heart and kidney, and at a lower level in the adult testis, liver and brain.

The protein localises to the nucleus. Its function is as follows. Transcription factor. Binds to the consensus DNA sequence 5'-AACAAT-3'. Also binds 5'-CACAAT-3' and 5'-AATAAT-3' but with a lower affinity. Acts partially redundantly with sox7 during cardiogenesis, acting indirectly through nodal-signaling to induce mesodermal, organizer and endodermal tissues, which then interact to initiate cardiogenesis. Also acts as an antagonist of beta-catenin signaling. This chain is Transcription factor Sox-18B (sox18-b), found in Xenopus laevis (African clawed frog).